Reading from the N-terminus, the 701-residue chain is Arachidonate 12-lipoxygenase, 12R-type (701 aa).

A PLAT domain is found at 2 to 119; the sequence is ATYKVKVATG…TLALREATGK (118 aa). The 582-residue stretch at 120 to 701 folds into the Lipoxygenase domain; it reads ITADDTLPIL…PVLIENSISI (582 aa). Positions 398, 403, 578, 582, and 701 each coordinate Fe cation.

This sequence belongs to the lipoxygenase family. Requires Fe cation as cofactor. As to expression, expressed in skin epidermis and other stratified epithelia including tongue and forestomach. Low levels of expression are found in trachea, brain and lung. Not expressed in intestine, liver, kidney, adipose tissue, muscle or hematopoietic cells.

Its subcellular location is the cytoplasm. It localises to the perinuclear region. It carries out the reaction 1-O-methyl-(5Z,8Z,11Z,14Z)-eicosatetraenoate + O2 = 1-O-methyl (5Z,8Z,10E,12R,14Z)-hydroperoxyiecosatetraenoate. The enzyme catalyses 1-O-methyl-(5Z,8Z,11Z,14Z)-eicosatetraenoate + O2 = 1-O-methyl-8-hydroperoxy-(5Z,9E,11Z,14Z)-eicosatetraenoate. The catalysed reaction is (5Z,8Z,11Z,14Z)-eicosatetraenoate + O2 = (12R)-hydroperoxy-(5Z,8Z,10E,14Z)-eicosatetraenoate. It catalyses the reaction N-[omega-(9Z,12Z)-octadecadienoyloxy]acyl-beta-D-glucosyl-(1&lt;-&gt;1)-octadecasphing-4E-enine + O2 = N-[omega-(9R)-hydroperoxy-(10E,12Z)-octadecadienoyloxy]acyl-beta-D-glucosyl-(1&lt;-&gt;1)-octadecasphing-4E-enine. It carries out the reaction a N-[omega-(9Z,12Z)-octadecadienoyloxy]-acylsphin-4E-enine + O2 = a N-[omega-(9R)-hydroperoxy-(10E,12Z)-octadecadienoyloxy]-acylsphin-4E-enine. The enzyme catalyses (6Z,9Z,12Z)-octadecatrienoate + O2 = 10-hydroperoxy-(6Z,8E,12Z)-octadecatrienoate. The catalysed reaction is (4Z,7Z,10Z,13Z,16Z,19Z)-docosahexaenoate + O2 = 14-hydroperoxy-(4Z,7Z,10Z,12E,16Z,19Z)-docosahexaenoate. It catalyses the reaction (8Z,11Z,14Z)-eicosatrienoate + O2 = (8Z,10E,14Z)-12-hydroperoxyeicosatrienoate. It carries out the reaction (5Z,8Z,11Z,14Z,17Z)-eicosapentaenoate + O2 = (5Z,7Z,8Z,10E,14Z,17Z)-12-hydroperoxyeicosapentaenoate. The enzyme catalyses (6Z,9Z,12Z)-octadecatrienoate + O2 = 10R-hydroperoxy-(6Z,8E,12Z)-octadecatrienoate. The catalysed reaction is 1-O-methyl-(5Z,8Z,11Z,14Z)-eicosatetraenoate + O2 = 1-O-methyl-(8R)-hydroperoxy-(5Z,9E,11Z,14Z)-eicosatrienoate. It catalyses the reaction 1-O-methyl-(9Z,12Z)-octadecadienoate + O2 = 1-O-methyl-(9R)-hydroperoxy-(10E,12Z)-octadecadienoate. It carries out the reaction 1-O-methyl-20-hydroxy-(5Z,8Z,11Z,14Z)-eicosatetraenoate + O2 = 1-O-methyl-8-hydroperoxy-20-hydroxy-(5Z,9E,11Z,14Z)-eicosatetraenoate. The enzyme catalyses 1-O-methyl-20-hydroxy-(5Z,8Z,11Z,14Z)-eicosatetraenoate + O2 = 1-O-methyl-12-hydroperoxy-20-hydroxy-(5Z,8Z,10E,14Z)-eicosatetraenoate. The catalysed reaction is 1-O-methyl-20-hydroxy-(5Z,8Z,11Z,14Z)-eicosatetraenoate + O2 = 1-O-methyl-9-hydroperoxy-20-hydroxy-(5Z,7E,11Z,14Z)-eicosatetraenoate. It catalyses the reaction 1-O-methyl-(9Z,12Z)-octadecadienoate + O2 = 1-O-methyl-(13S)-hydroperoxy-(9Z,11E)-octadecadienoate. It functions in the pathway lipid metabolism; hydroperoxy eicosatetraenoic acid biosynthesis. The protein operates within lipid metabolism; sphingolipid metabolism. Its activity is regulated as follows. Increased by calcium. Catalyzes the regio and stereo-specific incorporation of a single molecule of dioxygen into free and esterified polyunsaturated fatty acids generating lipid hydroperoxides that can be further reduced to the corresponding hydroxy species. Does not convert arachidonic acid to (12R)-hydroperoxyeicosatetraenoic acid/(12R)-HPETE. In the skin, acts upstream of ALOXE3 on the lineolate moiety of esterified omega-hydroxyacyl-sphingosine (EOS) ceramides to produce an epoxy-ketone derivative, a crucial step in the conjugation of omega-hydroxyceramide to membrane proteins. Therefore plays a crucial role in the synthesis of corneocytes lipid envelope and the establishment of the skin barrier to water loss. May also play a role in the regulation of the expression of airway mucins. The sequence is that of Arachidonate 12-lipoxygenase, 12R-type from Mus musculus (Mouse).